A 452-amino-acid chain; its full sequence is Trigger factor (452 aa).

Residues 171-256 (GDRVTISFKG…ATKVEAPQDT (86 aa)) form the PPIase FKBP-type domain.

The protein belongs to the FKBP-type PPIase family. Tig subfamily.

The protein localises to the cytoplasm. The enzyme catalyses [protein]-peptidylproline (omega=180) = [protein]-peptidylproline (omega=0). Functionally, involved in protein export. Acts as a chaperone by maintaining the newly synthesized protein in an open conformation. Functions as a peptidyl-prolyl cis-trans isomerase. This Rhodopseudomonas palustris (strain HaA2) protein is Trigger factor.